Here is a 206-residue protein sequence, read N- to C-terminus: Small ribosomal subunit protein uS4 (206 aa).

Positions 18–44 (NIWGRPKSPVNRREYGPGQHGQRRKGK) are disordered. The 64-residue stretch at 94-157 (RRLDAVVYRA…KQLAVVLEAV (64 aa)) folds into the S4 RNA-binding domain.

It belongs to the universal ribosomal protein uS4 family. In terms of assembly, part of the 30S ribosomal subunit. Contacts protein S5. The interaction surface between S4 and S5 is involved in control of translational fidelity.

Functionally, one of the primary rRNA binding proteins, it binds directly to 16S rRNA where it nucleates assembly of the body of the 30S subunit. In terms of biological role, with S5 and S12 plays an important role in translational accuracy. This Jannaschia sp. (strain CCS1) protein is Small ribosomal subunit protein uS4.